Here is a 91-residue protein sequence, read N- to C-terminus: Small ribosomal subunit protein bS16 (91 aa).

The protein belongs to the bacterial ribosomal protein bS16 family. As to quaternary structure, part of the 30S ribosomal subunit.

In terms of biological role, binds to the lower part of the body of the 30S subunit, where it stabilizes two of its domains. The sequence is that of Small ribosomal subunit protein bS16 from Thermus thermophilus.